Reading from the N-terminus, the 392-residue chain is Heat-inducible transcription repressor HrcA (392 aa).

It belongs to the HrcA family.

Functionally, negative regulator of class I heat shock genes (grpE-dnaK-dnaJ and groELS operons). Prevents heat-shock induction of these operons. The protein is Heat-inducible transcription repressor HrcA of Chlamydia trachomatis serovar D (strain ATCC VR-885 / DSM 19411 / UW-3/Cx).